The sequence spans 235 residues: tRNA (guanine-N(7)-)-methyltransferase (235 aa).

Residues Gly60, 83–84, 116–117, and Leu136 contribute to the S-adenosyl-L-methionine site; these read EI and NA. Residue Asp139 is part of the active site. An S-adenosyl-L-methionine-binding site is contributed by 214 to 216; it reads SEE.

Belongs to the class I-like SAM-binding methyltransferase superfamily. TrmB family.

It localises to the nucleus. The enzyme catalyses guanosine(46) in tRNA + S-adenosyl-L-methionine = N(7)-methylguanosine(46) in tRNA + S-adenosyl-L-homocysteine. It functions in the pathway tRNA modification; N(7)-methylguanine-tRNA biosynthesis. In terms of biological role, catalyzes the formation of N(7)-methylguanine at position 46 (m7G46) in tRNA. The sequence is that of tRNA (guanine-N(7)-)-methyltransferase from Anopheles gambiae (African malaria mosquito).